Here is a 129-residue protein sequence, read N- to C-terminus: Putative redox protein FMP46, mitochondrial (129 aa).

Residues 1-21 constitute a mitochondrion transit peptide; that stretch reads MSMFRTLQRQPRTISLFTHDL. Residue Cys-94 is part of the active site.

It belongs to the FMP46 family.

Its subcellular location is the mitochondrion. Putative mitochondrial redox protein which could be involved in the reduction of small toxic molecules. The chain is Putative redox protein FMP46, mitochondrial (FMP46) from Candida glabrata (strain ATCC 2001 / BCRC 20586 / JCM 3761 / NBRC 0622 / NRRL Y-65 / CBS 138) (Yeast).